The primary structure comprises 275 residues: 2,3,4,5-tetrahydropyridine-2,6-dicarboxylate N-succinyltransferase (275 aa).

Substrate is bound by residues R106 and D143.

This sequence belongs to the transferase hexapeptide repeat family. As to quaternary structure, homotrimer.

The protein resides in the cytoplasm. The enzyme catalyses (S)-2,3,4,5-tetrahydrodipicolinate + succinyl-CoA + H2O = (S)-2-succinylamino-6-oxoheptanedioate + CoA. Its pathway is amino-acid biosynthesis; L-lysine biosynthesis via DAP pathway; LL-2,6-diaminopimelate from (S)-tetrahydrodipicolinate (succinylase route): step 1/3. The protein is 2,3,4,5-tetrahydropyridine-2,6-dicarboxylate N-succinyltransferase of Ralstonia nicotianae (strain ATCC BAA-1114 / GMI1000) (Ralstonia solanacearum).